The following is a 170-amino-acid chain: MVDHARARKMADRIKEIVARKLDRGIKDPRLGFVTVTDVRVTGDLQHASIFYTVYGTDEERADTAAALKSATGMLRSEVGKNITARLTPSLEFILDGVPENAAAIDALLEEARRRDADVQAQAKAGVYAGDEDPYVKPRVIGEDEDDDDEEGDEDGDDVDRSAPGYEPAH.

The interval 123–170 (AKAGVYAGDEDPYVKPRVIGEDEDDDDEEGDEDGDDVDRSAPGYEPAH) is disordered. Residues 143–158 (EDEDDDDEEGDEDGDD) are compositionally biased toward acidic residues.

The protein belongs to the RbfA family. As to quaternary structure, monomer. Binds 30S ribosomal subunits, but not 50S ribosomal subunits or 70S ribosomes.

The protein localises to the cytoplasm. In terms of biological role, one of several proteins that assist in the late maturation steps of the functional core of the 30S ribosomal subunit. Associates with free 30S ribosomal subunits (but not with 30S subunits that are part of 70S ribosomes or polysomes). Required for efficient processing of 16S rRNA. May interact with the 5'-terminal helix region of 16S rRNA. This chain is Ribosome-binding factor A, found in Clavibacter sepedonicus (Clavibacter michiganensis subsp. sepedonicus).